The primary structure comprises 356 residues: 16-methoxy-2,3-dihydro-3-hydroxytabersonine synthase (356 aa).

C49, H71, C102, C105, C108, C116, and C162 together coordinate Zn(2+). 187–192 (GLGAVG) is an NAD(+) binding site.

This sequence belongs to the zinc-containing alcohol dehydrogenase family. The cofactor is Zn(2+). In terms of tissue distribution, expressed in leaf epidermis.

The catalysed reaction is (3R)-3-hydroxy-16-methoxy-2,3-dihydrotabersonine + A = (3R)-1,2-didehydro-3-hydroxy-16-methoxy-2,3-dihydrotabersonine + AH2. It catalyses the reaction (3R)-3-hydroxy-2,3-dihydrotabersonine + A = (3R)-1,2-didehydro-3-hydroxy-2,3-dihydrotabersonine + AH2. It participates in alkaloid biosynthesis; vindoline biosynthesis. Functionally, converts the unstable imine alcohols produced by CYP71D1V2/T3O into 3-hydroxy-16-methoxy-2,3-dihydrotabersonine or 3-hydroxy-2,3-dihydrotabersonine. This Catharanthus roseus (Madagascar periwinkle) protein is 16-methoxy-2,3-dihydro-3-hydroxytabersonine synthase.